A 367-amino-acid chain; its full sequence is MSLRRIMVTAVRNLHPVTLSPSPRINILYGANGSGKTSVLEAVHLLGLARSFRSTRLNPVIQYEQAACTVFGEVQLSEGGTSNLGVSRERAGDFTIRIDGQNAKSAAQLAELLPLQLINPDSFRLLEGAPKIRRQFLDWGVFHVEPRFMPAWQRLQKALRQRNSWLRHGTLDPASQAAWDRELCLASAEIDEYRRNYIKALKPVFEQTLSELVELDGLTLSYYRGWDKDRELNEVLASSLLRDQQMGHTQAGPQRADLRLRLAANNAADILSRGQQKLVVCALRIAQGHLVSQARRGHCIYLVDDLPSELDDQHRRALCRLLEELRCQVFITCVDHELLREGWQTETPVALFHVEQGRITQTHDHRE.

30–37 (GANGSGKT) serves as a coordination point for ATP.

Belongs to the RecF family.

It is found in the cytoplasm. The RecF protein is involved in DNA metabolism; it is required for DNA replication and normal SOS inducibility. RecF binds preferentially to single-stranded, linear DNA. It also seems to bind ATP. The protein is DNA replication and repair protein RecF of Pseudomonas putida (strain W619).